The sequence spans 396 residues: Acetate kinase (396 aa).

Asn-8 is a Mg(2+) binding site. An ATP-binding site is contributed by Lys-15. Arg-90 contacts substrate. Asp-147 functions as the Proton donor/acceptor in the catalytic mechanism. ATP contacts are provided by residues His-207–Gly-211, Asp-283–Arg-285, and Gly-330–Asn-334. Residue Glu-384 coordinates Mg(2+).

This sequence belongs to the acetokinase family. In terms of assembly, homodimer. Mg(2+) serves as cofactor. Requires Mn(2+) as cofactor.

It is found in the cytoplasm. The enzyme catalyses acetate + ATP = acetyl phosphate + ADP. The protein operates within metabolic intermediate biosynthesis; acetyl-CoA biosynthesis; acetyl-CoA from acetate: step 1/2. Catalyzes the formation of acetyl phosphate from acetate and ATP. Can also catalyze the reverse reaction. This chain is Acetate kinase, found in Lacticaseibacillus paracasei (strain ATCC 334 / BCRC 17002 / CCUG 31169 / CIP 107868 / KCTC 3260 / NRRL B-441) (Lactobacillus paracasei).